The sequence spans 430 residues: Probable beta-1,3-galactosyl-O-glycosyl-glycoprotein beta-1,6-N-acetylglucosaminyltransferase 7 (430 aa).

The Cytoplasmic segment spans residues 1 to 8 (MSQLRATK). A helical; Signal-anchor for type II membrane protein membrane pass occupies residues 9–25 (SGLVVRAVICIFIFLYL). At 26–430 (RNPTPAESEE…QSHFNMRLNR (405 aa)) the chain is on the extracellular side. 4 disulfides stabilise this stretch: Cys-53/Cys-205, Cys-139/Cys-354, Cys-160/Cys-187, and Cys-363/Cys-395. Residue Asn-87 is glycosylated (N-linked (GlcNAc...) asparagine). N-linked (GlcNAc...) asparagine glycosylation is present at Asn-272.

This sequence belongs to the glycosyltransferase 14 family.

The protein resides in the golgi apparatus membrane. Its pathway is protein modification; protein glycosylation. Probable glycosyltransferase. This is Probable beta-1,3-galactosyl-O-glycosyl-glycoprotein beta-1,6-N-acetylglucosaminyltransferase 7 from Homo sapiens (Human).